The chain runs to 404 residues: Short chain dehydrogenase sirR (404 aa).

Positions 1 to 28 are cleaved as a signal peptide; it reads MHSKPQRALVIGATGVSGWSLCLQLLQT. The NADP(+) site is built by S56 and L58. N-linked (GlcNAc...) asparagine glycosylation is found at N67 and N157. S237 acts as the Proton donor in catalysis. A glycan (N-linked (GlcNAc...) asparagine) is linked at N274. V291 lines the NADP(+) pocket.

Belongs to the short-chain dehydrogenases/reductases (SDR) family. Highly divergent.

The protein operates within mycotoxin biosynthesis. Short chain dehydrogenase; part of the gene cluster that mediates the biosynthesis of sirodesmin PL, an epipolythiodioxopiperazine (ETP) characterized by a disulfide bridged cyclic dipeptide and that acts as a phytotoxin which is involved in the blackleg didease of canola. SirD catalyzes the O-prenylation of L-tyrosine (L-Tyr) in the presence of dimethylallyl diphosphate (DMAPP) to yield 4-O-dimethylallyl-L-Tyr, and therefore represents probably the first pathway-specific enzyme in the biosynthesis of sirodesmin PL. 4-O-dimethylallyl-L-Tyr, then undergoes condensation with L-Ser in a reaction catalyzed by the non-ribosomal peptide synthase sirP to form the diketopiperazine (DKP) backbone. Further bishydroxylation of the DKP performed by the cytochrome P450 monooxygenase sirC leads to the production of the intermediate phomamide. This step is essential to form the reactive thiol group required for toxicity of sirodesmin PL. The next steps of sirodesmin biosynthesis are not well understood yet, but some predictions could be made from intermediate compounds identification. Phomamide is converted into phomalizarine via oxidation, probably by sirT. Further oxidation, methylation (by sirM or sirN) and reduction steps convert phomalizarine to deacetyl sirodesmin. Finally, acetyltransferase sirH probably acetylates deacetyl sirodesmin to produce sirodesmin PL. The sequence is that of Short chain dehydrogenase sirR from Leptosphaeria maculans (Blackleg fungus).